Here is a 745-residue protein sequence, read N- to C-terminus: Single-minded homolog 1-A (745 aa).

In terms of domain architecture, bHLH spans 1–53; sequence MKEKSKNAGRTRREKENSEFYELAKLLPLPSAITSQSDKASIIRLTTSYLKMR. PAS domains follow at residues 77 to 147 and 218 to 288; these read GREL…QPYH and PPSA…LVKG. The 410-residue stretch at 336-745 folds into the Single-minded C-terminal domain; sequence EYKGLQLSLD…GTSVIITNGS (410 aa). A compositionally biased stretch (polar residues) spans 350–364; that stretch reads TKPSFTYNSPSNPVT. Disordered regions lie at residues 350–413 and 529–563; these read TKPS…LTDS and EDSA…EPSK. The short motif at 368–387 is the Nuclear localization signal element; that stretch reads RVGKSRVSRTKTKTRLSPYS. Residues 369-381 show a composition bias toward basic residues; it reads VGKSRVSRTKTKT. Over residues 532 to 544 the composition is skewed to low complexity; sequence AVSSAPDGGSASD.

As to quaternary structure, efficient DNA binding requires dimerization with another bHLH protein. Heterodimer of sim1a and arnt. As to expression, expressed in embryonic forebrain at the eleven somite stage. Detected in brain throughout embryonic development.

The protein resides in the nucleus. Its function is as follows. Transcriptional factor that may have pleiotropic effects during embryogenesis and in the adult. This chain is Single-minded homolog 1-A (sim1a), found in Danio rerio (Zebrafish).